We begin with the raw amino-acid sequence, 572 residues long: Phosphoenolpyruvate-protein phosphotransferase (572 aa).

Residue His190 is the Tele-phosphohistidine intermediate of the active site. Residues Arg297 and Arg333 each coordinate phosphoenolpyruvate. 2 residues coordinate Mg(2+): Glu432 and Asp456. Residues 455 to 456 and Arg466 contribute to the phosphoenolpyruvate site; that span reads ND. The active-site Proton donor is Cys503.

Belongs to the PEP-utilizing enzyme family. In terms of assembly, homodimer. Requires Mg(2+) as cofactor.

It localises to the cytoplasm. The enzyme catalyses L-histidyl-[protein] + phosphoenolpyruvate = N(pros)-phospho-L-histidyl-[protein] + pyruvate. Functionally, general (non sugar-specific) component of the phosphoenolpyruvate-dependent sugar phosphotransferase system (sugar PTS). This major carbohydrate active-transport system catalyzes the phosphorylation of incoming sugar substrates concomitantly with their translocation across the cell membrane. Enzyme I transfers the phosphoryl group from phosphoenolpyruvate (PEP) to the phosphoryl carrier protein (HPr). This Listeria innocua serovar 6a (strain ATCC BAA-680 / CLIP 11262) protein is Phosphoenolpyruvate-protein phosphotransferase (ptsI).